Consider the following 600-residue polypeptide: Netrin-1 (600 aa).

A signal peptide spans 1–24; it reads MMRAMWEALAALAAVSCLVGAVRG. One can recognise a Laminin N-terminal domain in the interval 47–284; it reads HPRRCIPDFV…AVSDLQVGGR (238 aa). 3 N-linked (GlcNAc...) asparagine glycosylation sites follow: N95, N116, and N131. Intrachain disulfides connect C119/C152, C285/C294, C287/C304, C306/C315, C318/C338, C341/C350, C343/C368, C371/C380, C383/C401, C404/C416, C406/C423, C425/C434, C437/C451, and C472/C544. 3 Laminin EGF-like domains span residues 285–340, 341–403, and 404–453; these read CKCN…ECVA, CNCN…ACKA, and CDCH…PCIK. An N-linked (GlcNAc...) asparagine glycan is attached at N417. The NTR domain maps to 472–600; sequence CDSYCKASKG…KFQQREKKEL (129 aa). The short motif at 530–532 is the Cell attachment site element; sequence RGD.

Binds to its receptors; DCC, UNC5A, UNC5B, UNC5C and probably UNC5D. Binds to its receptor; DSCAM. Interacts with APP.

It is found in the secreted. Its subcellular location is the cytoplasm. In terms of biological role, netrins control guidance of CNS commissural axons and peripheral motor axons. Its association with either DCC or some UNC5 receptors will lead to axon attraction or repulsion, respectively. Binding to UNC5C might cause dissociation of UNC5C from polymerized TUBB3 in microtubules and thereby lead to increased microtubule dynamics and axon repulsion. Involved in dorsal root ganglion axon projection towards the spinal cord. It also serves as a survival factor via its association with its receptors which prevent the initiation of apoptosis. Involved in colorectal tumorigenesis by regulating apoptosis. This chain is Netrin-1 (NTN1), found in Sus scrofa (Pig).